Reading from the N-terminus, the 1036-residue chain is Isoleucine--tRNA ligase (1036 aa).

The 'HIGH' region motif lies at 46–56; the sequence is PFATGLPHYGH. The short motif at 589–593 is the 'KMSKS' region element; the sequence is KMSKR. Lys-592 contacts ATP.

The protein belongs to the class-I aminoacyl-tRNA synthetase family. IleS type 2 subfamily. In terms of assembly, monomer. Requires Zn(2+) as cofactor.

It localises to the cytoplasm. The catalysed reaction is tRNA(Ile) + L-isoleucine + ATP = L-isoleucyl-tRNA(Ile) + AMP + diphosphate. Its function is as follows. Catalyzes the attachment of isoleucine to tRNA(Ile). As IleRS can inadvertently accommodate and process structurally similar amino acids such as valine, to avoid such errors it has two additional distinct tRNA(Ile)-dependent editing activities. One activity is designated as 'pretransfer' editing and involves the hydrolysis of activated Val-AMP. The other activity is designated 'posttransfer' editing and involves deacylation of mischarged Val-tRNA(Ile). The chain is Isoleucine--tRNA ligase from Chlamydia trachomatis serovar L2 (strain ATCC VR-902B / DSM 19102 / 434/Bu).